The sequence spans 159 residues: 6,7-dimethyl-8-ribityllumazine synthase (159 aa).

Residues Phe-22, 57 to 59 (TYE), and 81 to 83 (TII) contribute to the 5-amino-6-(D-ribitylamino)uracil site. 86–87 (ST) serves as a coordination point for (2S)-2-hydroxy-3-oxobutyl phosphate. The Proton donor role is filled by His-89. Met-114 contacts 5-amino-6-(D-ribitylamino)uracil. (2S)-2-hydroxy-3-oxobutyl phosphate is bound at residue Arg-128.

This sequence belongs to the DMRL synthase family. In terms of assembly, forms an icosahedral capsid composed of 60 subunits, arranged as a dodecamer of pentamers.

The enzyme catalyses (2S)-2-hydroxy-3-oxobutyl phosphate + 5-amino-6-(D-ribitylamino)uracil = 6,7-dimethyl-8-(1-D-ribityl)lumazine + phosphate + 2 H2O + H(+). The protein operates within cofactor biosynthesis; riboflavin biosynthesis; riboflavin from 2-hydroxy-3-oxobutyl phosphate and 5-amino-6-(D-ribitylamino)uracil: step 1/2. Catalyzes the formation of 6,7-dimethyl-8-ribityllumazine by condensation of 5-amino-6-(D-ribitylamino)uracil with 3,4-dihydroxy-2-butanone 4-phosphate. This is the penultimate step in the biosynthesis of riboflavin. This chain is 6,7-dimethyl-8-ribityllumazine synthase, found in Buchnera aphidicola subsp. Schizaphis graminum (strain Sg).